Consider the following 330-residue polypeptide: GTP 3',8-cyclase (330 aa).

The 217-residue stretch at 9-225 folds into the Radical SAM core domain; the sequence is RFGRTVNYVR…IRRHHELIPA (217 aa). Arg-18 serves as a coordination point for GTP. 2 residues coordinate [4Fe-4S] cluster: Cys-25 and Cys-29. Residue Tyr-31 participates in S-adenosyl-L-methionine binding. Cys-32 lines the [4Fe-4S] cluster pocket. Residue Arg-67 participates in GTP binding. Gly-71 is a binding site for S-adenosyl-L-methionine. Thr-97 is a binding site for GTP. Ser-121 is a binding site for S-adenosyl-L-methionine. Residue Lys-158 coordinates GTP. Residue Met-192 participates in S-adenosyl-L-methionine binding. [4Fe-4S] cluster-binding residues include Cys-256 and Cys-259. 261–263 is a GTP binding site; the sequence is RVR. Cys-273 lines the [4Fe-4S] cluster pocket.

Belongs to the radical SAM superfamily. MoaA family. In terms of assembly, monomer and homodimer. Requires [4Fe-4S] cluster as cofactor.

It carries out the reaction GTP + AH2 + S-adenosyl-L-methionine = (8S)-3',8-cyclo-7,8-dihydroguanosine 5'-triphosphate + 5'-deoxyadenosine + L-methionine + A + H(+). The protein operates within cofactor biosynthesis; molybdopterin biosynthesis. Catalyzes the cyclization of GTP to (8S)-3',8-cyclo-7,8-dihydroguanosine 5'-triphosphate. The polypeptide is GTP 3',8-cyclase (Marinobacter nauticus (strain ATCC 700491 / DSM 11845 / VT8) (Marinobacter aquaeolei)).